The chain runs to 196 residues: Molybdenum cofactor guanylyltransferase (196 aa).

Residues 14–16 (LAG), Lys-27, Asp-73, and Asp-106 each bind GTP. Mg(2+) is bound at residue Asp-106.

Belongs to the MobA family. As to quaternary structure, monomer. The cofactor is Mg(2+).

The protein localises to the cytoplasm. The enzyme catalyses Mo-molybdopterin + GTP + H(+) = Mo-molybdopterin guanine dinucleotide + diphosphate. In terms of biological role, transfers a GMP moiety from GTP to Mo-molybdopterin (Mo-MPT) cofactor (Moco or molybdenum cofactor) to form Mo-molybdopterin guanine dinucleotide (Mo-MGD) cofactor. This Acidiphilium cryptum (strain JF-5) protein is Molybdenum cofactor guanylyltransferase.